The sequence spans 60 residues: Large ribosomal subunit protein bL32 (60 aa).

Belongs to the bacterial ribosomal protein bL32 family.

In Geobacter sulfurreducens (strain ATCC 51573 / DSM 12127 / PCA), this protein is Large ribosomal subunit protein bL32.